A 356-amino-acid chain; its full sequence is Homoserine O-acetyltransferase (356 aa).

Positions 50 to 335 constitute an AB hydrolase-1 domain; that stretch reads NVILVCHALT…DEPYGHDAFL (286 aa). The active-site Nucleophile is the S146. Position 215 (R215) interacts with substrate. Active-site residues include D302 and H331. Substrate is bound at residue D332.

Belongs to the AB hydrolase superfamily. MetX family. In terms of assembly, homodimer.

It localises to the cytoplasm. It carries out the reaction L-homoserine + acetyl-CoA = O-acetyl-L-homoserine + CoA. It participates in amino-acid biosynthesis; L-methionine biosynthesis via de novo pathway; O-acetyl-L-homoserine from L-homoserine: step 1/1. Functionally, transfers an acetyl group from acetyl-CoA to L-homoserine, forming acetyl-L-homoserine. This Chlorobaculum tepidum (strain ATCC 49652 / DSM 12025 / NBRC 103806 / TLS) (Chlorobium tepidum) protein is Homoserine O-acetyltransferase.